Here is a 146-residue protein sequence, read N- to C-terminus: Hemoglobin subunit beta (146 aa).

V1 carries the N-acetylvaline modification. The region spanning 2–146 (HLTGEEKSAV…VANALAHKYH (145 aa)) is the Globin domain. Position 12 is a phosphothreonine (T12). S44 is subject to Phosphoserine. K59 bears the N6-acetyllysine mark. H63 contacts heme b. K82 is subject to N6-acetyllysine. H92 serves as a coordination point for heme b. C93 carries the post-translational modification S-nitrosocysteine. At K144 the chain carries N6-acetyllysine.

The protein belongs to the globin family. As to quaternary structure, heterotetramer of two alpha chains and two beta chains. In terms of tissue distribution, red blood cells.

Involved in oxygen transport from the lung to the various peripheral tissues. The chain is Hemoglobin subunit beta (HBB) from Saguinus oedipus (Cotton-top tamarin).